Here is a 265-residue protein sequence, read N- to C-terminus: 4-hydroxy-tetrahydrodipicolinate reductase (265 aa).

NAD(+) is bound by residues 7–12 (GASGRM) and Asp-33. Arg-34 provides a ligand contact to NADP(+). Residues 96 to 98 (GTT) and 120 to 123 (AANM) each bind NAD(+). His-153 serves as the catalytic Proton donor/acceptor. His-154 is a (S)-2,3,4,5-tetrahydrodipicolinate binding site. Catalysis depends on Lys-157, which acts as the Proton donor. Residue 163–164 (GT) participates in (S)-2,3,4,5-tetrahydrodipicolinate binding.

The protein belongs to the DapB family.

The protein resides in the cytoplasm. The enzyme catalyses (S)-2,3,4,5-tetrahydrodipicolinate + NAD(+) + H2O = (2S,4S)-4-hydroxy-2,3,4,5-tetrahydrodipicolinate + NADH + H(+). It carries out the reaction (S)-2,3,4,5-tetrahydrodipicolinate + NADP(+) + H2O = (2S,4S)-4-hydroxy-2,3,4,5-tetrahydrodipicolinate + NADPH + H(+). Its pathway is amino-acid biosynthesis; L-lysine biosynthesis via DAP pathway; (S)-tetrahydrodipicolinate from L-aspartate: step 4/4. Its function is as follows. Catalyzes the conversion of 4-hydroxy-tetrahydrodipicolinate (HTPA) to tetrahydrodipicolinate. The chain is 4-hydroxy-tetrahydrodipicolinate reductase from Burkholderia ambifaria (strain ATCC BAA-244 / DSM 16087 / CCUG 44356 / LMG 19182 / AMMD) (Burkholderia cepacia (strain AMMD)).